Here is a 539-residue protein sequence, read N- to C-terminus: O-phosphoserine--tRNA(Cys) ligase (539 aa).

Substrate-binding positions include 188–190 (HMT), 233–235 (SAS), 275–276 (YY), and Asn327.

The protein belongs to the class-II aminoacyl-tRNA synthetase family. O-phosphoseryl-tRNA(Cys) synthetase subfamily. Homotetramer. Interacts with SepCysS.

It catalyses the reaction tRNA(Cys) + O-phospho-L-serine + ATP = O-phospho-L-seryl-tRNA(Cys) + AMP + diphosphate. Functionally, catalyzes the attachment of O-phosphoserine (Sep) to tRNA(Cys). In Methanosarcina mazei (strain ATCC BAA-159 / DSM 3647 / Goe1 / Go1 / JCM 11833 / OCM 88) (Methanosarcina frisia), this protein is O-phosphoserine--tRNA(Cys) ligase.